The sequence spans 257 residues: Thioredoxin-dependent peroxide reductase, mitochondrial (257 aa).

The transit peptide at 1-62 (MAAAAGRLLW…FAFSTSSSFH (62 aa)) directs the protein to the mitochondrion. Positions 64-222 (PAVTQHAPHF…PLRLVKAFQF (159 aa)) constitute a Thioredoxin domain. Lys84 carries the N6-succinyllysine modification. An N6-acetyllysine; alternate modification is found at Lys92. Lys92 carries the N6-succinyllysine; alternate modification. Catalysis depends on Cys109, which acts as the Cysteine sulfenic acid (-SOH) intermediate. The residue at position 147 (Thr147) is a Phosphothreonine.

This sequence belongs to the peroxiredoxin family. AhpC/Prx1 subfamily. In terms of assembly, homodimer; disulfide-linked, upon oxidation. 6 homodimers assemble to form a ring-like dodecamer. Interacts with NEK6. Interacts with LRRK2. Interacts with MAP3K13. Interacts with RPS6KC1 (via PX domain). Phosphorylated by LRRK2; phosphorylation reduces perodixase activity. In terms of processing, the enzyme can be inactivated by further oxidation of the cysteine sulfenic acid (C(P)-SOH) to sulphinic acid (C(P)-SO2H) and sulphonic acid (C(P)-SO3H) instead of its condensation to a disulfide bond. Post-translationally, S-palmitoylated. As to expression, ubiquitous.

Its subcellular location is the mitochondrion. The protein resides in the cytoplasm. It is found in the early endosome. It catalyses the reaction a hydroperoxide + [thioredoxin]-dithiol = an alcohol + [thioredoxin]-disulfide + H2O. Thiol-specific peroxidase that catalyzes the reduction of hydrogen peroxide and organic hydroperoxides to water and alcohols, respectively. Plays a role in cell protection against oxidative stress by detoxifying peroxides. Acts synergistically with MAP3K13 to regulate the activation of NF-kappa-B in the cytosol. Required for the maintenance of physical strength. This is Thioredoxin-dependent peroxide reductase, mitochondrial (Prdx3) from Rattus norvegicus (Rat).